The following is a 278-amino-acid chain: Rhomboid protease GlpG (278 aa).

A run of 6 helical transmembrane segments spans residues 95–115 (GPLT…MQIL), 143–163 (AFLH…WYLG), 170–190 (LGSG…GWAQ), 192–212 (LFSG…MGYC), 224–241 (LMLP…LVAG), and 245–267 (ILGM…LMAF). Ser202 (nucleophile) is an active-site residue. Residue His255 is part of the active site.

The protein belongs to the peptidase S54 family.

It is found in the cell inner membrane. The catalysed reaction is Cleaves type-1 transmembrane domains using a catalytic dyad composed of serine and histidine that are contributed by different transmembrane domains.. Functionally, rhomboid-type serine protease that catalyzes intramembrane proteolysis. This is Rhomboid protease GlpG from Serratia proteamaculans (strain 568).